The following is a 296-amino-acid chain: Polyadenylate-binding protein 2-A (296 aa).

Residues 1 to 106 (MAAVSSVASL…GELTGDQTIE (106 aa)) form a disordered region. Gly residues predominate over residues 71–82 (GRGGSGGGGAGG). Over residues 84–97 (EELEDEELEEEEPG) the composition is skewed to acidic residues. Positions 107–141 (DPELEAIKARVREMEEEAEKLKELQNEVEKQMNMS) form a coiled coil. The segment at 146–296 (NAGPVIMSVE…ARATSWYTPY (151 aa)) is necessary for homooligomerization. Positions 163 to 240 (RSIYVGNVDY…RQIKVVPKRT (78 aa)) constitute an RRM domain.

As to quaternary structure, monomer and homooligomer. Binds RNA as a monomer and oligomerizes when bound to poly(A). As to expression, shows dynamic spatial expression throughout development. First expressed in the animal pole region of the egg and this pattern persists through to the blastula stage. In gastrula and neurula embryos, expressed mainly in ectodermal, neural and epidermal regions. Neural tissue-specific expression pattern persists into tailbud stage when expression is localized to the brain and spinal cord. At early tadpole stage, expression becomes gradually confined to the specific vesicle regions of the developing brain. At stage 39, expressed in the telencephalon and mesencephalon regions of the brain. Also detected in the eye and olfactory pit at the tadpole stage. Expressed during gut endoderm development. At stage 35, expressed exclusively in the anterior portion of the gut endoderm, which includes the prospective liver, stomach and pancreas. As development proceeds, expression becomes restricted to the pancreas, and by stage 46/47 (the seventh day of development) expression is localized exclusively to the pancreas. Expressed in most adult tissues.

The protein resides in the nucleus. It is found in the cytoplasm. In terms of biological role, involved in the 3'-end formation of mRNA precursors (pre-mRNA) by the addition of a poly(A) tail of 200-250 nt to the upstream cleavage product. Stimulates poly(A) polymerase (PAPOLA) conferring processivity on the poly(A) tail elongation reaction and also controls the poly(A) tail length. Increases the affinity of poly(A) polymerase for RNA. Binds to poly(A) and to poly(G) with high affinity. May protect the poly(A) tail from degradation. The sequence is that of Polyadenylate-binding protein 2-A (pabpn1-a) from Xenopus laevis (African clawed frog).